Here is a 176-residue protein sequence, read N- to C-terminus: ATP synthase subunit delta (176 aa).

This sequence belongs to the ATPase delta chain family. F-type ATPases have 2 components, F(1) - the catalytic core - and F(0) - the membrane proton channel. F(1) has five subunits: alpha(3), beta(3), gamma(1), delta(1), epsilon(1). F(0) has three main subunits: a(1), b(2) and c(10-14). The alpha and beta chains form an alternating ring which encloses part of the gamma chain. F(1) is attached to F(0) by a central stalk formed by the gamma and epsilon chains, while a peripheral stalk is formed by the delta and b chains.

It is found in the cell inner membrane. In terms of biological role, f(1)F(0) ATP synthase produces ATP from ADP in the presence of a proton or sodium gradient. F-type ATPases consist of two structural domains, F(1) containing the extramembraneous catalytic core and F(0) containing the membrane proton channel, linked together by a central stalk and a peripheral stalk. During catalysis, ATP synthesis in the catalytic domain of F(1) is coupled via a rotary mechanism of the central stalk subunits to proton translocation. Its function is as follows. This protein is part of the stalk that links CF(0) to CF(1). It either transmits conformational changes from CF(0) to CF(1) or is implicated in proton conduction. The chain is ATP synthase subunit delta from Nitratiruptor sp. (strain SB155-2).